Here is a 65-residue protein sequence, read N- to C-terminus: Light-harvesting protein B800/830/1020 alpha-2 chain (65 aa).

Residues 1–13 are Cytoplasmic-facing; the sequence is MWKLWKFVDFRMT. A helical transmembrane segment spans residues 14-34; sequence AVGFHIFFALIAFAVHFACIS. A bacteriochlorophyll is bound at residue histidine 29. The Periplasmic segment spans residues 35 to 65; sequence SERFNWLEGAPAAEYYMDENPGIWKRTSYDG.

The protein belongs to the antenna complex alpha subunit family. The core complex is formed by different alpha and beta chains, binding bacteriochlorophyll molecules, and arranged most probably in tetrameric structures disposed around the reaction center. The non-pigmented gamma chains may constitute additional components.

It localises to the cell inner membrane. Functionally, antenna complexes are light-harvesting systems, which transfer the excitation energy to the reaction centers. In Halorhodospira halochloris (Ectothiorhodospira halochloris), this protein is Light-harvesting protein B800/830/1020 alpha-2 chain.